The chain runs to 183 residues: Threonylcarbamoyl-AMP synthase (183 aa).

The region spanning 1-183 is the YrdC-like domain; sequence MNITQIIEKL…LFTNQLVRQG (183 aa).

This sequence belongs to the SUA5 family. TsaC subfamily.

The protein localises to the cytoplasm. It catalyses the reaction L-threonine + hydrogencarbonate + ATP = L-threonylcarbamoyladenylate + diphosphate + H2O. In terms of biological role, required for the formation of a threonylcarbamoyl group on adenosine at position 37 (t(6)A37) in tRNAs that read codons beginning with adenine. Catalyzes the conversion of L-threonine, HCO(3)(-)/CO(2) and ATP to give threonylcarbamoyl-AMP (TC-AMP) as the acyladenylate intermediate, with the release of diphosphate. This is Threonylcarbamoyl-AMP synthase from Histophilus somni (strain 129Pt) (Haemophilus somnus).